Here is a 262-residue protein sequence, read N- to C-terminus: 3-methyl-2-oxobutanoate hydroxymethyltransferase (262 aa).

Mg(2+)-binding residues include Asp43 and Asp82. 3-methyl-2-oxobutanoate-binding positions include 43–44, Asp82, and Lys111; that span reads DS. Residue Glu113 participates in Mg(2+) binding. Glu180 (proton acceptor) is an active-site residue.

Belongs to the PanB family. As to quaternary structure, homodecamer; pentamer of dimers. Mg(2+) is required as a cofactor.

The protein resides in the cytoplasm. It carries out the reaction 3-methyl-2-oxobutanoate + (6R)-5,10-methylene-5,6,7,8-tetrahydrofolate + H2O = 2-dehydropantoate + (6S)-5,6,7,8-tetrahydrofolate. Its pathway is cofactor biosynthesis; (R)-pantothenate biosynthesis; (R)-pantoate from 3-methyl-2-oxobutanoate: step 1/2. Its function is as follows. Catalyzes the reversible reaction in which hydroxymethyl group from 5,10-methylenetetrahydrofolate is transferred onto alpha-ketoisovalerate to form ketopantoate. The chain is 3-methyl-2-oxobutanoate hydroxymethyltransferase from Wolinella succinogenes (strain ATCC 29543 / DSM 1740 / CCUG 13145 / JCM 31913 / LMG 7466 / NCTC 11488 / FDC 602W) (Vibrio succinogenes).